Here is a 452-residue protein sequence, read N- to C-terminus: Phosphoglucosamine mutase (452 aa).

Residue Ser103 is the Phosphoserine intermediate of the active site. Mg(2+)-binding residues include Ser103, Asp244, Asp246, and Asp248. A Phosphoserine modification is found at Ser103.

The protein belongs to the phosphohexose mutase family. Requires Mg(2+) as cofactor. In terms of processing, activated by phosphorylation.

The catalysed reaction is alpha-D-glucosamine 1-phosphate = D-glucosamine 6-phosphate. Catalyzes the conversion of glucosamine-6-phosphate to glucosamine-1-phosphate. The protein is Phosphoglucosamine mutase of Rhodospirillum rubrum (strain ATCC 11170 / ATH 1.1.1 / DSM 467 / LMG 4362 / NCIMB 8255 / S1).